The sequence spans 344 residues: Dihydroorotase (344 aa).

Residues histidine 14 and histidine 16 each contribute to the Zn(2+) site. Substrate-binding positions include 16 to 18 and asparagine 42; that span reads HLR. Zn(2+)-binding residues include lysine 100, histidine 137, and histidine 175. Lysine 100 is modified (N6-carboxylysine). Histidine 137 is a substrate binding site. Leucine 220 is a substrate binding site. Aspartate 248 lines the Zn(2+) pocket. The active site involves aspartate 248. Histidine 252 and alanine 264 together coordinate substrate.

This sequence belongs to the metallo-dependent hydrolases superfamily. DHOase family. Class II DHOase subfamily. As to quaternary structure, homodimer. Requires Zn(2+) as cofactor.

The enzyme catalyses (S)-dihydroorotate + H2O = N-carbamoyl-L-aspartate + H(+). It participates in pyrimidine metabolism; UMP biosynthesis via de novo pathway; (S)-dihydroorotate from bicarbonate: step 3/3. Its function is as follows. Catalyzes the reversible cyclization of carbamoyl aspartate to dihydroorotate. The protein is Dihydroorotase of Roseobacter denitrificans (strain ATCC 33942 / OCh 114) (Erythrobacter sp. (strain OCh 114)).